Reading from the N-terminus, the 180-residue chain is ATP-dependent protease subunit HslV (180 aa).

The active site involves Thr9. Ala164, Cys167, and Thr170 together coordinate Na(+).

It belongs to the peptidase T1B family. HslV subfamily. A double ring-shaped homohexamer of HslV is capped on each side by a ring-shaped HslU homohexamer. The assembly of the HslU/HslV complex is dependent on binding of ATP.

Its subcellular location is the cytoplasm. It catalyses the reaction ATP-dependent cleavage of peptide bonds with broad specificity.. With respect to regulation, allosterically activated by HslU binding. Protease subunit of a proteasome-like degradation complex believed to be a general protein degrading machinery. This chain is ATP-dependent protease subunit HslV, found in Leptospira borgpetersenii serovar Hardjo-bovis (strain JB197).